We begin with the raw amino-acid sequence, 34 residues long: Photosystem II reaction center protein M (34 aa).

The helical transmembrane segment at 7 to 27 (GFIATILFVLVPTVFLLILYI) threads the bilayer.

The protein belongs to the PsbM family. PSII is composed of 1 copy each of membrane proteins PsbA, PsbB, PsbC, PsbD, PsbE, PsbF, PsbH, PsbI, PsbJ, PsbK, PsbL, PsbM, PsbT, PsbX, PsbY, PsbZ, Psb30/Ycf12, peripheral proteins PsbO, CyanoQ (PsbQ), PsbU, PsbV and a large number of cofactors. It forms dimeric complexes.

Its subcellular location is the cellular thylakoid membrane. Its function is as follows. One of the components of the core complex of photosystem II (PSII). PSII is a light-driven water:plastoquinone oxidoreductase that uses light energy to abstract electrons from H(2)O, generating O(2) and a proton gradient subsequently used for ATP formation. It consists of a core antenna complex that captures photons, and an electron transfer chain that converts photonic excitation into a charge separation. This subunit is found at the monomer-monomer interface. This chain is Photosystem II reaction center protein M, found in Picosynechococcus sp. (strain ATCC 27264 / PCC 7002 / PR-6) (Agmenellum quadruplicatum).